A 217-amino-acid polypeptide reads, in one-letter code: Adenylate kinase (217 aa).

Gly-10 to Thr-15 provides a ligand contact to ATP. Positions Ser-30–Val-59 are NMP. AMP contacts are provided by residues Thr-31, Arg-36, Ser-57–Val-59, Gly-85–Arg-88, and Gln-92. An LID region spans residues Gly-126–Asp-163. Position 127 (Arg-127) interacts with ATP. Zn(2+)-binding residues include Cys-130 and Cys-133. Residue Thr-136–Tyr-137 participates in ATP binding. Cys-150 and Cys-153 together coordinate Zn(2+). Arg-160 and Arg-171 together coordinate AMP. Residue Gln-199 participates in ATP binding.

It belongs to the adenylate kinase family. In terms of assembly, monomer.

It localises to the cytoplasm. The catalysed reaction is AMP + ATP = 2 ADP. It functions in the pathway purine metabolism; AMP biosynthesis via salvage pathway; AMP from ADP: step 1/1. Functionally, catalyzes the reversible transfer of the terminal phosphate group between ATP and AMP. Plays an important role in cellular energy homeostasis and in adenine nucleotide metabolism. This chain is Adenylate kinase, found in Desulfitobacterium hafniense (strain DSM 10664 / DCB-2).